A 618-amino-acid polypeptide reads, in one-letter code: Transcriptional regulator CPUR_05421 (618 aa).

The zn(2)-C6 fungal-type DNA-binding region spans 14–41 (CSHLVGREIGCSRDLAGCRRCTSEGRAC). Residues 52–87 (TRRRNRANQDVTRSALYSSNTTPQTISDQATGRPCE) form a disordered region. Residues 59–81 (NQDVTRSALYSSNTTPQTISDQA) show a composition bias toward polar residues.

The protein localises to the nucleus. Its function is as follows. Transcriptional regulator; part of the ergochrome gene cluster responsible for the typical purple-black color of the ergot sclerotia. The ergochrome gene cluster produces several ergot pigments including the yellow ergochrome secalonic acid and its derivatives, as well as the red anthraquinones endocrocin and clavorubin. The protein is Transcriptional regulator CPUR_05421 of Claviceps purpurea (strain 20.1) (Ergot fungus).